The following is a 217-amino-acid chain: Small ribosomal subunit protein uS3 (217 aa).

Residues 38–106 (IRQLIQTKLA…QVHINIVEIK (69 aa)) form the KH type-2 domain.

Belongs to the universal ribosomal protein uS3 family. Part of the 30S ribosomal subunit. Forms a tight complex with proteins S10 and S14.

Its function is as follows. Binds the lower part of the 30S subunit head. Binds mRNA in the 70S ribosome, positioning it for translation. The chain is Small ribosomal subunit protein uS3 from Lactococcus lactis subsp. lactis (strain IL1403) (Streptococcus lactis).